The following is a 124-amino-acid chain: UPF0235 protein (124 aa).

The interval methionine 1–asparagine 22 is disordered.

Belongs to the UPF0235 family.

This is UPF0235 protein from Dictyostelium discoideum (Social amoeba).